The sequence spans 417 residues: Creatine kinase U-type, mitochondrial (417 aa).

The transit peptide at 1–39 directs the protein to the mitochondrion; sequence MAGPFSRLLSARPGLRLLALAGAGSLAAGFLLRPEPVRA. The tract at residues 40–64 is cardiolipin-binding; the sequence is ASERRRLYPPSAEYPDLRKHNNCMA. The region spanning 45–131 is the Phosphagen kinase N-terminal domain; it reads RLYPPSAEYP…FDPVIQERHN (87 aa). Ser-151 bears the Phosphoserine mark. The Phosphagen kinase C-terminal domain occupies 158–400; the sequence is YVLSSRVRTG…NYLIDCERRL (243 aa). Position 161–165 (161–165) interacts with ATP; the sequence is SSRVR. A Phosphoserine modification is found at Ser-196. Position 213 is a phosphothreonine (Thr-213). His-224 is a binding site for ATP. Ser-232 carries the phosphoserine modification. ATP contacts are provided by residues Arg-269, Arg-325, 353-358, and Asp-368; that span reads RGTGGV. Position 355 is a phosphothreonine (Thr-355).

The protein belongs to the ATP:guanido phosphotransferase family. As to quaternary structure, exists as an octamer composed of four MTCK homodimers.

It is found in the mitochondrion inner membrane. The catalysed reaction is creatine + ATP = N-phosphocreatine + ADP + H(+). Its function is as follows. Reversibly catalyzes the transfer of phosphate between ATP and various phosphogens (e.g. creatine phosphate). Creatine kinase isoenzymes play a central role in energy transduction in tissues with large, fluctuating energy demands, such as skeletal muscle, heart, brain and spermatozoa. The protein is Creatine kinase U-type, mitochondrial (CKMT1A) of Homo sapiens (Human).